A 416-amino-acid polypeptide reads, in one-letter code: Serine hydroxymethyltransferase (416 aa).

Residues L118 and 122 to 124 (GHL) each bind (6S)-5,6,7,8-tetrahydrofolate. At K226 the chain carries N6-(pyridoxal phosphate)lysine. (6S)-5,6,7,8-tetrahydrofolate-binding positions include E242 and 350 to 352 (SPF).

It belongs to the SHMT family. As to quaternary structure, homodimer. Requires pyridoxal 5'-phosphate as cofactor.

It is found in the cytoplasm. It carries out the reaction (6R)-5,10-methylene-5,6,7,8-tetrahydrofolate + glycine + H2O = (6S)-5,6,7,8-tetrahydrofolate + L-serine. It functions in the pathway one-carbon metabolism; tetrahydrofolate interconversion. The protein operates within amino-acid biosynthesis; glycine biosynthesis; glycine from L-serine: step 1/1. Its function is as follows. Catalyzes the reversible interconversion of serine and glycine with tetrahydrofolate (THF) serving as the one-carbon carrier. This reaction serves as the major source of one-carbon groups required for the biosynthesis of purines, thymidylate, methionine, and other important biomolecules. Also exhibits THF-independent aldolase activity toward beta-hydroxyamino acids, producing glycine and aldehydes, via a retro-aldol mechanism. The sequence is that of Serine hydroxymethyltransferase from Helicobacter acinonychis (strain Sheeba).